A 696-amino-acid chain; its full sequence is Glycosyltransferase GlyA (696 aa).

The tract at residues 1–301 (MLVDDKITVI…NQLSRQEESE (301 aa)) is GT2 domain. Residues 302–556 (KKAIVLAANY…TELGQNHHLH (255 aa)) are GT8 domain. Residues 308–313 (AANYGY) and 399–400 (DC) contribute to the UDP site. 3 residues coordinate Mn(2+): Asp-399, Asp-401, and His-518. 518–524 (HYLSHRK) is a binding site for UDP.

This sequence in the N-terminal section; belongs to the glycosyltransferase 2 family. In the central section; belongs to the glycosyltransferase 8 family.

It participates in protein modification; protein glycosylation. Its function is as follows. Involved in the polymorphic O-glycosylation of the serine-rich repeat protein PsrP. Catalyzes the fourth step in glycosylation of PsrP in this bacteria. Can transfer the sugar from UDP-galactose to the terminal sugar moiety of PsrP-GlcNAc-Glc-Gal or of PsrP-GlcNAc-Glc-Glc (using truncated substrates with the PsrP SSR1 domain). Has hydrolytic activity against UDP-galactose and to a lesser extent against UDP-glucose. The polypeptide is Glycosyltransferase GlyA (Streptococcus pneumoniae serotype 4 (strain ATCC BAA-334 / TIGR4)).